The following is a 463-amino-acid chain: 3-isopropylmalate dehydratase large subunit (463 aa).

Residues Cys-347, Cys-407, and Cys-410 each coordinate [4Fe-4S] cluster.

Belongs to the aconitase/IPM isomerase family. LeuC type 1 subfamily. As to quaternary structure, heterodimer of LeuC and LeuD. Requires [4Fe-4S] cluster as cofactor.

The catalysed reaction is (2R,3S)-3-isopropylmalate = (2S)-2-isopropylmalate. The protein operates within amino-acid biosynthesis; L-leucine biosynthesis; L-leucine from 3-methyl-2-oxobutanoate: step 2/4. Its function is as follows. Catalyzes the isomerization between 2-isopropylmalate and 3-isopropylmalate, via the formation of 2-isopropylmaleate. This Buchnera aphidicola subsp. Cinara cedri (strain Cc) protein is 3-isopropylmalate dehydratase large subunit.